The chain runs to 470 residues: Shutoff alkaline exonuclease (470 aa).

The protein belongs to the herpesviridae alkaline nuclease family. In terms of assembly, forms a complex with the DNA polymerase, the DNA polymerase processivity factor, and the major DNA binding protein.

It localises to the host nucleus. The protein resides in the host cytoplasm. Plays a role in processing non linear or branched viral DNA intermediates in order to promote the production of mature packaged unit-length linear progeny viral DNA molecules. Exhibits endonuclease and exonuclease activities and accepts both double-stranded and single-stranded DNA as substrate. Exonuclease digestion of DNA is in the 5'-&gt; 3' direction and the products are 5'-monophosphate nucleosides. Additionally, forms a recombinase with the major DNA-binding protein, which displays strand exchange activity. Also acts as a cytoplasmic RNA endonuclease that induces degradation of the majority of the cellular messenger RNAs during early lytic infection. The resulting inhibition of cellular protein synthesis serves to ensure maximal viral gene expression and evasion from host immune response. Internally cleaves host mRNAs which are then degraded by the cellular exonuclease XRN1. Bypasses therefore the regulatory steps of deadenylation and decapping normally required for XRN1 activation. The chain is Shutoff alkaline exonuclease from Epstein-Barr virus (strain GD1) (HHV-4).